A 94-amino-acid chain; its full sequence is Large ribosomal subunit protein bL27 (94 aa).

A propeptide spanning residues 1–10 (MQFLFNIQLF) is cleaved from the precursor.

This sequence belongs to the bacterial ribosomal protein bL27 family. In terms of processing, the N-terminus is cleaved by ribosomal processing cysteine protease Prp.

This Fusobacterium nucleatum subsp. nucleatum (strain ATCC 25586 / DSM 15643 / BCRC 10681 / CIP 101130 / JCM 8532 / KCTC 2640 / LMG 13131 / VPI 4355) protein is Large ribosomal subunit protein bL27.